The sequence spans 72 residues: Protein RALF-like 36 (72 aa).

The N-terminal stretch at methionine 1–alanine 27 is a signal peptide. 2 cysteine pairs are disulfide-bonded: cysteine 43–cysteine 51 and cysteine 63–cysteine 69.

It belongs to the plant rapid alkalinization factor (RALF) family.

It localises to the secreted. Functionally, cell signaling peptide that may regulate plant stress, growth, and development. Mediates a rapid alkalinization of extracellular space by mediating a transient increase in the cytoplasmic Ca(2+) concentration leading to a calcium-dependent signaling events through a cell surface receptor and a concomitant activation of some intracellular mitogen-activated protein kinases. This Arabidopsis thaliana (Mouse-ear cress) protein is Protein RALF-like 36.